The following is a 261-amino-acid chain: uncharacterized protein (261 aa).

Residues 135 to 261 enclose the N-acetyltransferase domain; that stretch reads LVLKRIDEDI…VTEYTIYYSG (127 aa).

The protein belongs to the acetyltransferase family.

This is an uncharacterized protein from Bacillus subtilis (strain 168).